Consider the following 495-residue polypeptide: Serine/threonine protein phosphatase 2A 57 kDa regulatory subunit B' alpha isoform (495 aa).

Positions 1–13 (MFKKIMKGANRKA) are enriched in basic residues. 2 disordered regions span residues 1-61 (MFKK…AATT) and 462-495 (QAKS…MITS). Residues 49–61 (VPSSPNSMAAATT) are compositionally biased toward polar residues.

Belongs to the phosphatase 2A regulatory subunit B56 family. PP2A consists of a common heteromeric enzyme, composed of a catalytic subunit (subunits C), a constant regulatory subunit (subunit A), and a variety of regulatory subunits such as subunits B (the R2/B/PR55/B55, R3/B''/PR72/PR130/PR59 and R5/B'/B56 families). Interacts with BZR1. Interacts with BRI1. Interacts with SRK2E/OST1. Expressed ubiquitously, higher levels in leaves.

The protein resides in the nucleus. It localises to the cytoplasm. In terms of biological role, the B regulatory subunit may modulate substrate selectivity and catalytic activity, and may also direct the localization of the catalytic enzyme to a particular subcellular compartment. Required for the formation of the PP2A holoenzyme that positively regulates brassinosteroid signaling by dephosphorylating and activating BZR1. This chain is Serine/threonine protein phosphatase 2A 57 kDa regulatory subunit B' alpha isoform (B'ALPHA), found in Arabidopsis thaliana (Mouse-ear cress).